Here is a 94-residue protein sequence, read N- to C-terminus: MTKSELIERLCAEQTHLSAKEIEDAVKDILEHMASTLESGDRIEIRGFGSFSLHYREPRVGRNPKTGDKVELEGKYVPHFKPGKELRERVNSGL.

Belongs to the bacterial histone-like protein family. In terms of assembly, heterodimer of an alpha and a beta chain.

Functionally, this protein is one of the two subunits of integration host factor, a specific DNA-binding protein that functions in genetic recombination as well as in transcriptional and translational control. This chain is Integration host factor subunit beta, found in Vibrio atlanticus (strain LGP32) (Vibrio splendidus (strain Mel32)).